We begin with the raw amino-acid sequence, 303 residues long: HTH-type transcriptional regulator YjiE (303 aa).

The HTH lysR-type domain occupies 11–68 (IETKWLYDFLTLEKCRNFSQAAVSRNVSQPAFSRRIRALEQAIGVELFNRQVTPLQLS). The segment at residues 28-47 (FSQAAVSRNVSQPAFSRRIR) is a DNA-binding region (H-T-H motif).

This sequence belongs to the LysR transcriptional regulatory family. As to quaternary structure, forms dimers, tetramers and possibly dodecameric complexes; oligomerization may be governed by cellular concentrations. DNA-binding seems to decrease oligomerization.

In terms of biological role, protects cells from HOCl (hypochlorite) stress but not peroxide or diamide stress. Decreases the intracellular load of reactive oxygen species by up-regulating genes involved in methionine and cysteine biosynthesis and down-regulating Fur-regulated genes involved in iron acquisition. Has also been suggested to down-regulate expression of the flagellar regulon, decreasing motility, but this activity was not confirmed in a second study. This is HTH-type transcriptional regulator YjiE (yjiE) from Escherichia coli (strain K12).